The primary structure comprises 161 residues: Phosphopantetheine adenylyltransferase (161 aa).

Serine 9 is a substrate binding site. ATP is bound by residues serine 9–phenylalanine 10 and histidine 17. The substrate site is built by lysine 41, leucine 73, and lysine 87. Residues glycine 88–arginine 90, glutamate 98, and tyrosine 123–serine 129 contribute to the ATP site.

The protein belongs to the bacterial CoaD family. As to quaternary structure, homohexamer. Mg(2+) is required as a cofactor.

Its subcellular location is the cytoplasm. The catalysed reaction is (R)-4'-phosphopantetheine + ATP + H(+) = 3'-dephospho-CoA + diphosphate. The protein operates within cofactor biosynthesis; coenzyme A biosynthesis; CoA from (R)-pantothenate: step 4/5. In terms of biological role, reversibly transfers an adenylyl group from ATP to 4'-phosphopantetheine, yielding dephospho-CoA (dPCoA) and pyrophosphate. The chain is Phosphopantetheine adenylyltransferase from Clostridium novyi (strain NT).